The chain runs to 76 residues: Defensin-like protein 163 (76 aa).

An N-terminal signal peptide occupies residues 1–27 (MAKLIYSYLFISMFVLSVLLALPNAEG). 4 disulfide bridges follow: Cys-33/Cys-76, Cys-43/Cys-62, Cys-48/Cys-70, and Cys-52/Cys-72.

This sequence belongs to the DEFL family.

It localises to the secreted. This chain is Defensin-like protein 163 (LCR24), found in Arabidopsis thaliana (Mouse-ear cress).